Reading from the N-terminus, the 302-residue chain is Urease accessory protein UreD 2 (302 aa).

The protein belongs to the UreD family. As to quaternary structure, ureD, UreF and UreG form a complex that acts as a GTP-hydrolysis-dependent molecular chaperone, activating the urease apoprotein by helping to assemble the nickel containing metallocenter of UreC. The UreE protein probably delivers the nickel.

The protein resides in the cytoplasm. Its function is as follows. Required for maturation of urease via the functional incorporation of the urease nickel metallocenter. This Brucella melitensis biotype 1 (strain ATCC 23456 / CCUG 17765 / NCTC 10094 / 16M) protein is Urease accessory protein UreD 2.